Consider the following 171-residue polypeptide: Co-chaperone protein HscB (171 aa).

The J domain occupies Asp-2 to Leu-74.

Belongs to the HscB family. As to quaternary structure, interacts with HscA and stimulates its ATPase activity. Interacts with IscU.

Functionally, co-chaperone involved in the maturation of iron-sulfur cluster-containing proteins. Seems to help targeting proteins to be folded toward HscA. The sequence is that of Co-chaperone protein HscB from Citrobacter koseri (strain ATCC BAA-895 / CDC 4225-83 / SGSC4696).